A 426-amino-acid polypeptide reads, in one-letter code: COMPASS component SWD1 (426 aa).

WD repeat units lie at residues 24–63, 70–109, 212–251, 264–307, and 310–350; these read ENPL…PICV, AHVR…KPLK, ITSS…ENSA, INKL…LVRV, and GAEE…KWSA. Positions 236 and 266 each coordinate DNA.

As to quaternary structure, component of the Set1C/COMPASS complex which consists of SET1(2), BRE2(2), SPP1(2), SDC1(1), SHG1(1), SWD1(1), SWD2(1), and SWD3(1).

The protein resides in the nucleus. It localises to the chromosome. The protein localises to the telomere. In terms of biological role, component of the Set1C/COMPASS complex that specifically mono-, di- and trimethylates histone H3 to form H3K4me1/2/3, which subsequently plays a role in telomere length maintenance and transcription elongation regulation. COMPASS recognizes ubiquitinated H2B on one face of the nucleosome which stimulates the methylation of H3 on the opposing face. SWD1/CPS50 acts as an assembly and regulatory hub for COMPASS complex formation. Serves as a highly utilized surface for COMPASS interaction with the nucleosome. This chain is COMPASS component SWD1, found in Saccharomyces cerevisiae (strain ATCC 204508 / S288c) (Baker's yeast).